We begin with the raw amino-acid sequence, 135 residues long: UPF0102 protein RPC_0320 (135 aa).

Belongs to the UPF0102 family.

The polypeptide is UPF0102 protein RPC_0320 (Rhodopseudomonas palustris (strain BisB18)).